The following is a 189-amino-acid chain: Peptidyl-tRNA hydrolase (189 aa).

A tRNA-binding site is contributed by tyrosine 18. Residue histidine 23 is the Proton acceptor of the active site. TRNA contacts are provided by phenylalanine 67, asparagine 69, and asparagine 115.

This sequence belongs to the PTH family. As to quaternary structure, monomer.

It localises to the cytoplasm. It catalyses the reaction an N-acyl-L-alpha-aminoacyl-tRNA + H2O = an N-acyl-L-amino acid + a tRNA + H(+). Functionally, hydrolyzes ribosome-free peptidyl-tRNAs (with 1 or more amino acids incorporated), which drop off the ribosome during protein synthesis, or as a result of ribosome stalling. In terms of biological role, catalyzes the release of premature peptidyl moieties from peptidyl-tRNA molecules trapped in stalled 50S ribosomal subunits, and thus maintains levels of free tRNAs and 50S ribosomes. This is Peptidyl-tRNA hydrolase from Leptospira borgpetersenii serovar Hardjo-bovis (strain JB197).